A 206-amino-acid polypeptide reads, in one-letter code: Ras-related protein RABG3e (206 aa).

15–22 is a binding site for GTP; that stretch reads GDSGVGKT. The short motif at 37 to 45 is the Effector region element; sequence YKATIGADF. GTP-binding positions include 63–67, 125–128, and 158–159; these read DTAGQ, NKID, and SA. S-geranylgeranyl cysteine attachment occurs at residues Cys-204 and Cys-206. At Cys-206 the chain carries Cysteine methyl ester.

Belongs to the small GTPase superfamily. Rab family.

The protein localises to the cell membrane. Its function is as follows. Intracellular vesicle trafficking and protein transport. May play a role in adaptation to stress by recylcing macromolecules in specific cellular compartments. This chain is Ras-related protein RABG3e (RABG3E), found in Arabidopsis thaliana (Mouse-ear cress).